We begin with the raw amino-acid sequence, 226 residues long: Cytidylate kinase (226 aa).

12-20 (GPSGAGKGT) is an ATP binding site.

This sequence belongs to the cytidylate kinase family. Type 1 subfamily.

It is found in the cytoplasm. The catalysed reaction is CMP + ATP = CDP + ADP. It catalyses the reaction dCMP + ATP = dCDP + ADP. This is Cytidylate kinase from Xanthomonas campestris pv. campestris (strain B100).